Reading from the N-terminus, the 393-residue chain is Phosphoglycerate kinase (393 aa).

Substrate is bound by residues 22 to 24, Arg-37, 60 to 63, Arg-119, and Arg-152; these read DFN and HLGR. Residues Lys-202, Gly-293, Glu-324, and 350 to 353 contribute to the ATP site; that span reads GGDS.

Belongs to the phosphoglycerate kinase family. In terms of assembly, monomer.

Its subcellular location is the cytoplasm. The enzyme catalyses (2R)-3-phosphoglycerate + ATP = (2R)-3-phospho-glyceroyl phosphate + ADP. The protein operates within carbohydrate degradation; glycolysis; pyruvate from D-glyceraldehyde 3-phosphate: step 2/5. The sequence is that of Phosphoglycerate kinase (pgk) from Borreliella burgdorferi (strain ATCC 35210 / DSM 4680 / CIP 102532 / B31) (Borrelia burgdorferi).